The primary structure comprises 575 residues: MATIGRRAYAEMYGPTVGDRVRLADTELVIEVEADYTLRAGGYGEEVKFGGGKVIRDGMGQSQRPNGPGPHDAVDCVVTNALILDHWGIVKADIGLRGQRIAAIGKAGNPDVQPGIDIVIGPGTEVIAGEGLIVTAGGIDCHIHFICPQQIEEALSSGVTTMLGGGTGPATGTFATTCTPGPENIANMLRAADAFPMNLGFFGKGNASRPEALRQQVEAGVIGLKLHEDWGTTPAAIDCCLSVADEGDVQVAIHSDTLNESGFVEDTIGATKGRTLCAFHTEGAGGGHAPDILRVVGEANFLPSSTNPTMPYTVNTLDEHVDMLMVCHHLDAAIAEDLAFAESRIRRETIAAEDILHDLGAISMFSSDSQAMGRVGEVVLRCWQTAHKMKVQRGKLPGDPERHDNGRAKRYVAKYTINPAIAHGVSHEVGSIEVGKWADLVFWRPAFFGVKPSLVMKGGFIASALMGDANASIPTPQPVHYRPMFGAFGGALTRGSLSFVSQAALASEVGSVYGLRKPLSAVKQCRTVKKGDMVHNAYLPRMEVDAQTYQVRADGQLLTCEPATALPMTQRYFLF.

A Urease domain is found at 137–575 (GGIDCHIHFI…LPMTQRYFLF (439 aa)). Residues H142, H144, and K225 each contribute to the Ni(2+) site. K225 carries the post-translational modification N6-carboxylysine. H227 is a substrate binding site. Residues H254 and H280 each coordinate Ni(2+). H328 (proton donor) is an active-site residue. Ni(2+) is bound at residue D368.

It belongs to the metallo-dependent hydrolases superfamily. Urease alpha subunit family. In terms of assembly, heterotrimer of UreA (gamma), UreB (beta) and UreC (alpha) subunits. Three heterotrimers associate to form the active enzyme. It depends on Ni cation as a cofactor. Post-translationally, carboxylation allows a single lysine to coordinate two nickel ions.

The protein localises to the cytoplasm. The catalysed reaction is urea + 2 H2O + H(+) = hydrogencarbonate + 2 NH4(+). It participates in nitrogen metabolism; urea degradation; CO(2) and NH(3) from urea (urease route): step 1/1. The protein is Urease subunit alpha of Methylibium petroleiphilum (strain ATCC BAA-1232 / LMG 22953 / PM1).